A 405-amino-acid chain; its full sequence is Growth/differentiation factor 11 (405 aa).

The first 24 residues, 1-24 (MVLAAPLLLGFLLLALELRPRGEA), serve as a signal peptide directing secretion. Residues 25–296 (AEGPAAAAAA…VLENTKRSRR (272 aa)) constitute a propeptide that is removed on maturation. Asn92 is a glycosylation site (N-linked (GlcNAc...) asparagine). 4 disulfide bridges follow: Cys302/Cys312, Cys311/Cys370, Cys339/Cys402, and Cys343/Cys404.

This sequence belongs to the TGF-beta family. As to quaternary structure, homodimer; disulfide-linked. Interacts directly with ACVR2B. Interacts directly with ACVR2A. Interacts with ACVR1B, TGFBR1 and ACVR1C in an ACVR2B-dependent manner. Interacts with FST isoform 2/FS288. Synthesized as large precursor molecule that undergoes proteolytic cleavage by furin-like proteases. This produces an inactive form consisting of the mature C-terminal portion non-covalently bound to its cleaved N-terminal propeptide. Activation of the mature form requires additional cleavage of the propeptide by a tolloid-like metalloproteinase.

It is found in the secreted. Its function is as follows. Secreted signal that acts globally to regulate anterior/posterior axial patterning during development. May play critical roles in patterning both mesodermal and neural tissues. It is required for proper vertebral patterning and orofacial development. Signals through activin receptors type-2, ACVR2A and ACVR2B, and activin receptors type-1, ACVR1B, ACVR1C and TGFBR1 leading to the phosphorylation of SMAD2 and SMAD3. The polypeptide is Growth/differentiation factor 11 (Gdf11) (Rattus norvegicus (Rat)).